A 207-amino-acid chain; its full sequence is LexA repressor (207 aa).

A DNA-binding region (H-T-H motif) is located at residues 29–49; that stretch reads VREICSAVDLSSTSTVHGHLA. Catalysis depends on for autocatalytic cleavage activity residues Ser128 and Lys166.

The protein belongs to the peptidase S24 family. As to quaternary structure, homodimer.

It catalyses the reaction Hydrolysis of Ala-|-Gly bond in repressor LexA.. Represses a number of genes involved in the response to DNA damage (SOS response), including recA and lexA. In the presence of single-stranded DNA, RecA interacts with LexA causing an autocatalytic cleavage which disrupts the DNA-binding part of LexA, leading to derepression of the SOS regulon and eventually DNA repair. In Lactobacillus johnsonii (strain CNCM I-12250 / La1 / NCC 533), this protein is LexA repressor.